Consider the following 1515-residue polypeptide: MRLGAALQAAALLTASLWSHPLLAASDDPAFKTTKLDHYPFNLNYFEDSDIVLYQDEARGTISRSEDAGATWTLVKDIEEGKAFQLVMHPFDRKRAYVLTSPGIHHFRTHDQGRTWQDFLADTEMTMFRLDILSFHATDPDRIIFNGMDCKEGKFFCEEVAMYTTDGFTSDAKFLRGSTSGCSWAKSSKLFTTGQDDLDKNRILCVVRDHFSPLKQDQRLMISDNFFSAKDAGGVIQEFEPNLDMTRPIQGVVNVAVVKKYLLVAASSMNTDEMSLFVSDDTLKWHRAMFPTDHKINQESYTVLESTEYSIQVDVMTTHPSNPMGVMYTSNSNGTFFTRNIEHTNRNHRGHVDFEKITGVQGIFMVNKVDNAEEVEKDRRGKKKIVSEITFDDGRTFEPIHADKERLHLHSVTELINAGRVFSSPAPGLVMGNGNTGKHLESWKDASLYISDDAGLTWIKGPNGPHKYEFGDQGSVLLAVMQAEEVDEVKYSLNHGKDWKTAKLPDDLKVKPIILTTTQDSTSLKFILIGEGKGRDEFHIVAIDFSSMHEATCKDSDMEDWYARVDDKGKATCLMGHTQKYRRRKKDADCFVKQEFKDPVPETKDCECSDQDFECDYNFKRDGKECVLVGTVVAPDGACKNAGPDDTFKGSSGWRLIPGNTCKRASGAQKDDLVDRKCKETSEPTPSEPSGNISTTPHNFSGDWLDFEKHYLEKGAESMDENEVVIARPINAQNAGQIFLTKDHGKTWHMPEALKDKNIWGIVTHQYFKEMAFFVQDTGSVIYTVDHGEHFHDFKAPGNGIDPDTKPLVFHPDHKDWMIWIGKKCEENTCYREASFSQDRGDNWKSIARYVYKCEFTGSSSYKFRSQDQIICSIQSREGNEKNIPFDLVSSNDLFKTSEVRQKNIKDFATMAEFIVVAAEDPERKSLKAFASLDGDSYAATRFPSNLDVKEERAFTILDSSTHAVKLFVPSPAQKDRCVGSIAKSNSNGTDYVVSITGVNCDENYFVDFEKMLTLEGVILVNIVANRENTNEPKKRRSLISHSDGATWSYLPPPRVDAEGKNYPCTSSDNGDENCALHIHGYTERKDHGKTYSSAGAVGLMFGVGNVGSTLGDIKDADTFLTTDAGISWKSVKKGAWRWAYGDQGSILMLVPSTKTKMVSYTTDEGETWNDHNFTDEPVDVLDMTTVSSGGSRNFLLWCRRSDKTVFAVNLDLTGLANTACKQVDDNDSESDYYAWSPSHPLRPDDCLFGHKSYYLRKKTDRKCYNKHKITPVFKMDVCECTREDFECDYNYELEGVGRNCVLAKGAQPMSREDWCSAHPKESTWYEPSGFRRIPISTCKEGRVFDNYTTSWPCPGHEEEYERQHGGPGGFTIFLIVILCVGAAGAVGVWVHRRWESGGFGQIRLGEQSSSGISFLDPDSPWVRYPVVAVSATVALVGALPLLVGALWRTTKTTVERWGIFGGVGRGTYGSLGLGGGSGARRFTTRDSFARGRSDYAGIDEDEGELLGDDSDEEV.

The first 24 residues, 1 to 24, serve as a signal peptide directing secretion; the sequence is MRLGAALQAAALLTASLWSHPLLA. Over 25–1370 the chain is Lumenal; sequence ASDDPAFKTT…YERQHGGPGG (1346 aa). 2 BNR repeats span residues 64 to 73 and 107 to 117; these read RSEDAGATWT and FRTHDQGRTWQ. Asn333 is a glycosylation site (N-linked (GlcNAc...) asparagine). BNR repeat units follow at residues 449-458 and 491-500; these read YISDDAGLTW and YSLNHGKDWK. A compositionally biased stretch (basic and acidic residues) spans 673–682; it reads LVDRKCKETS. The interval 673–698 is disordered; that stretch reads LVDRKCKETSEPTPSEPSGNISTTPH. Residues 683–698 are compositionally biased toward polar residues; sequence EPTPSEPSGNISTTPH. N-linked (GlcNAc...) asparagine glycosylation is found at Asn692 and Asn699. BNR repeat units lie at residues 739-749 and 836-845; these read FLTKDHGKTWH and FSQDRGDNWK. A glycan (N-linked (GlcNAc...) asparagine) is linked at Asn988. 3 BNR repeats span residues 1040–1050, 1120–1130, and 1161–1170; these read ISHSDGATWSY, FLTTDAGISWK, and YTTDEGETWN. 3 N-linked (GlcNAc...) asparagine glycosylation sites follow: Asn1173, Asn1227, and Asn1347. Residues 1371–1391 form a helical membrane-spanning segment; that stretch reads FTIFLIVILCVGAAGAVGVWV. The Cytoplasmic portion of the chain corresponds to 1392 to 1426; the sequence is HRRWESGGFGQIRLGEQSSSGISFLDPDSPWVRYP. Residues 1427–1447 traverse the membrane as a helical segment; it reads VVAVSATVALVGALPLLVGAL. Topologically, residues 1448–1515 are lumenal; that stretch reads WRTTKTTVER…LLGDDSDEEV (68 aa). The interval 1494–1515 is disordered; it reads SDYAGIDEDEGELLGDDSDEEV. Residues 1498–1515 show a composition bias toward acidic residues; the sequence is GIDEDEGELLGDDSDEEV.

It belongs to the VPS10-related sortilin family.

It is found in the golgi apparatus. It localises to the trans-Golgi network membrane. The protein resides in the prevacuolar compartment membrane. Its function is as follows. Functions as a sorting receptor in the Golgi compartment required for the intracellular sorting and delivery of soluble vacuolar proteins, like carboxypeptidase Y (CPY) and proteinase A. Executes multiple rounds of sorting by cycling between the late Golgi and a prevacuolar endosome-like compartment. This is Vacuolar protein sorting/targeting protein 10 (VPS10) from Pyricularia oryzae (strain 70-15 / ATCC MYA-4617 / FGSC 8958) (Rice blast fungus).